Consider the following 129-residue polypeptide: Large-conductance mechanosensitive channel (129 aa).

2 helical membrane passes run 10–30 (FAVK…GAFG) and 70–90 (AVML…VIAI).

The protein belongs to the MscL family. As to quaternary structure, homopentamer.

The protein resides in the cell inner membrane. Its function is as follows. Channel that opens in response to stretch forces in the membrane lipid bilayer. May participate in the regulation of osmotic pressure changes within the cell. This Actinobacillus pleuropneumoniae serotype 3 (strain JL03) protein is Large-conductance mechanosensitive channel.